Here is a 537-residue protein sequence, read N- to C-terminus: 2-isopropylmalate synthase (537 aa).

The Pyruvate carboxyltransferase domain maps to 8-273 (IIIFDTTLRD…FLGRPVDSME (266 aa)). Mn(2+)-binding residues include D17, H208, H210, and N244. The tract at residues 408–537 (RLELVQVSCG…PSEPVLTSKN (130 aa)) is regulatory domain.

Belongs to the alpha-IPM synthase/homocitrate synthase family. LeuA type 1 subfamily. In terms of assembly, homodimer. Mn(2+) serves as cofactor.

Its subcellular location is the cytoplasm. It carries out the reaction 3-methyl-2-oxobutanoate + acetyl-CoA + H2O = (2S)-2-isopropylmalate + CoA + H(+). Its pathway is amino-acid biosynthesis; L-leucine biosynthesis; L-leucine from 3-methyl-2-oxobutanoate: step 1/4. Functionally, catalyzes the condensation of the acetyl group of acetyl-CoA with 3-methyl-2-oxobutanoate (2-ketoisovalerate) to form 3-carboxy-3-hydroxy-4-methylpentanoate (2-isopropylmalate). This Crocosphaera subtropica (strain ATCC 51142 / BH68) (Cyanothece sp. (strain ATCC 51142)) protein is 2-isopropylmalate synthase.